Reading from the N-terminus, the 291-residue chain is 33 kDa chaperonin (291 aa).

2 disulfide bridges follow: cysteine 237/cysteine 239 and cysteine 270/cysteine 273.

This sequence belongs to the HSP33 family. Under oxidizing conditions two disulfide bonds are formed involving the reactive cysteines. Under reducing conditions zinc is bound to the reactive cysteines and the protein is inactive.

It is found in the cytoplasm. Redox regulated molecular chaperone. Protects both thermally unfolding and oxidatively damaged proteins from irreversible aggregation. Plays an important role in the bacterial defense system toward oxidative stress. This Bacillus cytotoxicus (strain DSM 22905 / CIP 110041 / 391-98 / NVH 391-98) protein is 33 kDa chaperonin.